A 91-amino-acid polypeptide reads, in one-letter code: Small ribosomal subunit protein uS19 (91 aa).

This sequence belongs to the universal ribosomal protein uS19 family.

Its function is as follows. Protein S19 forms a complex with S13 that binds strongly to the 16S ribosomal RNA. The polypeptide is Small ribosomal subunit protein uS19 (Neorickettsia sennetsu (strain ATCC VR-367 / Miyayama) (Ehrlichia sennetsu)).